Consider the following 201-residue polypeptide: Dephospho-CoA kinase (201 aa).

Positions 4-201 (IIGITGGIAS…LEGGRQDDRD (198 aa)) constitute a DPCK domain. 12–17 (ASGKST) contacts ATP.

The protein belongs to the CoaE family.

The protein resides in the cytoplasm. It carries out the reaction 3'-dephospho-CoA + ATP = ADP + CoA + H(+). It participates in cofactor biosynthesis; coenzyme A biosynthesis; CoA from (R)-pantothenate: step 5/5. In terms of biological role, catalyzes the phosphorylation of the 3'-hydroxyl group of dephosphocoenzyme A to form coenzyme A. The polypeptide is Dephospho-CoA kinase (Streptococcus pneumoniae (strain ATCC BAA-255 / R6)).